A 53-amino-acid polypeptide reads, in one-letter code: Mannose/glucose-specific lectin alpha chain (53 aa).

It belongs to the leguminous lectin family. In terms of assembly, heterodimer of an alpha and a beta chain.

Functionally, this lectin specifically binds mannose and glucose. The protein is Mannose/glucose-specific lectin alpha chain of Vicia cracca (Bird vetch).